The sequence spans 881 residues: Low-affinity phosphate transporter PHO90 (881 aa).

Positions 1-288 (MRFSHFLKYN…HLNTRTELIE (288 aa)) constitute an SPX domain. A run of 12 helical transmembrane segments spans residues 417 to 437 (IYFI…NDAA), 456 to 476 (AIPL…FKVL), 493 to 513 (ILAA…TLGE), 514 to 534 (VLAQ…FAGC), 539 to 559 (VLLM…NVAA), 581 to 601 (AQAL…SSPI), 663 to 683 (FTVK…LWCV), 691 to 711 (FGSS…TGLL), 718 to 738 (AFPW…KAVS), 758 to 778 (GVFA…TFVS), 805 to 825 (ILVF…SSGF), and 854 to 874 (ASIL…ASVV).

It belongs to the CitM (TC 2.A.11) transporter family.

It is found in the membrane. Low-affinity phosphate transporter involved in the control of cellular phosphate levels. The chain is Low-affinity phosphate transporter PHO90 (PHO90) from Saccharomyces cerevisiae (strain ATCC 204508 / S288c) (Baker's yeast).